A 140-amino-acid chain; its full sequence is Large ribosomal subunit protein uL11 (140 aa).

Belongs to the universal ribosomal protein uL11 family. In terms of assembly, part of the ribosomal stalk of the 50S ribosomal subunit. Interacts with L10 and the large rRNA to form the base of the stalk. L10 forms an elongated spine to which L12 dimers bind in a sequential fashion forming a multimeric L10(L12)X complex. One or more lysine residues are methylated.

In terms of biological role, forms part of the ribosomal stalk which helps the ribosome interact with GTP-bound translation factors. In Oleidesulfovibrio alaskensis (strain ATCC BAA-1058 / DSM 17464 / G20) (Desulfovibrio alaskensis), this protein is Large ribosomal subunit protein uL11.